The chain runs to 269 residues: Phosphatidylglycerol--prolipoprotein diacylglyceryl transferase (269 aa).

7 helical membrane passes run 17 to 37, 59 to 79, 95 to 115, 123 to 143, 181 to 201, 206 to 226, and 242 to 262; these read IGPIAIRWYALAYIAGLMLGW, FLVWATMGVVLGGRLGYVLFY, WQGGMSFHGGALGVIVGIIAF, LFQVGDVICCAVPIGLFFGRI, AGLEGAVLFLVLFGLWRLTGI, GALSGVFLAGYGLARIASEFF, and MGQLLSIPQVLVGLALLAWAL. Residue R142 participates in a 1,2-diacyl-sn-glycero-3-phospho-(1'-sn-glycerol) binding.

Belongs to the Lgt family.

It localises to the cell inner membrane. It catalyses the reaction L-cysteinyl-[prolipoprotein] + a 1,2-diacyl-sn-glycero-3-phospho-(1'-sn-glycerol) = an S-1,2-diacyl-sn-glyceryl-L-cysteinyl-[prolipoprotein] + sn-glycerol 1-phosphate + H(+). Its pathway is protein modification; lipoprotein biosynthesis (diacylglyceryl transfer). Its function is as follows. Catalyzes the transfer of the diacylglyceryl group from phosphatidylglycerol to the sulfhydryl group of the N-terminal cysteine of a prolipoprotein, the first step in the formation of mature lipoproteins. In Paramagnetospirillum magneticum (strain ATCC 700264 / AMB-1) (Magnetospirillum magneticum), this protein is Phosphatidylglycerol--prolipoprotein diacylglyceryl transferase.